The sequence spans 661 residues: Arginine--tRNA ligase, cytoplasmic (661 aa).

The segment at 1–72 is could be involved in the assembly of the multisynthetase complex; sequence MEARVAEAAA…QEEQSKTVKS (72 aa). Residues 201 to 203, His-212, Tyr-385, Asp-389, and Gln-413 contribute to the L-arginine site; that span reads SPN. The short motif at 202-213 is the 'HIGH' region element; the sequence is PNIAKEMHVGHL. Residues 530–544 are interaction with tRNA; sequence NTAAYLLYAFTRIRA.

This sequence belongs to the class-I aminoacyl-tRNA synthetase family. As to quaternary structure, monomer; also part of a multisubunit complex that groups tRNA ligases for Arg, Asp, Glu, Gln, Ile, Leu, Lys, Met and Pro.

It is found in the cytoplasm. The protein resides in the cytosol. The catalysed reaction is tRNA(Arg) + L-arginine + ATP = L-arginyl-tRNA(Arg) + AMP + diphosphate. Its function is as follows. Forms part of a macromolecular complex that catalyzes the attachment of specific amino acids to cognate tRNAs during protein synthesis. The chain is Arginine--tRNA ligase, cytoplasmic (RARS1) from Gallus gallus (Chicken).